The following is a 234-amino-acid chain: Phosphoribosylaminoimidazole-succinocarboxamide synthase (234 aa).

The protein belongs to the SAICAR synthetase family.

It carries out the reaction 5-amino-1-(5-phospho-D-ribosyl)imidazole-4-carboxylate + L-aspartate + ATP = (2S)-2-[5-amino-1-(5-phospho-beta-D-ribosyl)imidazole-4-carboxamido]succinate + ADP + phosphate + 2 H(+). Its pathway is purine metabolism; IMP biosynthesis via de novo pathway; 5-amino-1-(5-phospho-D-ribosyl)imidazole-4-carboxamide from 5-amino-1-(5-phospho-D-ribosyl)imidazole-4-carboxylate: step 1/2. The polypeptide is Phosphoribosylaminoimidazole-succinocarboxamide synthase (Streptococcus agalactiae serotype V (strain ATCC BAA-611 / 2603 V/R)).